A 712-amino-acid chain; its full sequence is Anaerobic ribonucleoside-triphosphate reductase (712 aa).

Positions 3-92 (PHVMKRDGCK…EYRHDRDIQR (90 aa)) constitute an ATP-cone domain. The Glycine radical domain maps to 583–708 (KKVNPYDKID…VKRRVKHLGN (126 aa)). Positions 644, 647, 662, and 665 each coordinate Zn(2+). G681 is modified (glycine radical).

It belongs to the anaerobic ribonucleoside-triphosphate reductase family. In terms of assembly, forms a tetramer composed of two NrdD and two NrdG subunits.

It catalyses the reaction a ribonucleoside 5'-triphosphate + formate + H(+) = a 2'-deoxyribonucleoside 5'-triphosphate + CO2 + H2O. Activated under anaerobic conditions by NrdG, a tightly associated activase. Activation involves the formation of a glycyl radical at Gly-681. In terms of biological role, catalyzes the conversion of ribonucleotides into deoxyribonucleotides, which are required for DNA synthesis and repair. This Salmonella typhimurium (strain LT2 / SGSC1412 / ATCC 700720) protein is Anaerobic ribonucleoside-triphosphate reductase (nrdD).